The following is a 399-amino-acid chain: Succinate--CoA ligase [ADP-forming] subunit beta (399 aa).

One can recognise an ATP-grasp domain in the interval 9 to 254 (KAVLQPFGVS…ETEEDAKEIE (246 aa)). ATP contacts are provided by residues lysine 46, 53-55 (GRG), glutamate 109, serine 112, and glutamate 117. Asparagine 209 and aspartate 223 together coordinate Mg(2+). Substrate contacts are provided by residues asparagine 274 and 331–333 (GIM).

This sequence belongs to the succinate/malate CoA ligase beta subunit family. As to quaternary structure, heterotetramer of two alpha and two beta subunits. Requires Mg(2+) as cofactor.

It carries out the reaction succinate + ATP + CoA = succinyl-CoA + ADP + phosphate. The enzyme catalyses GTP + succinate + CoA = succinyl-CoA + GDP + phosphate. The protein operates within carbohydrate metabolism; tricarboxylic acid cycle; succinate from succinyl-CoA (ligase route): step 1/1. Its function is as follows. Succinyl-CoA synthetase functions in the citric acid cycle (TCA), coupling the hydrolysis of succinyl-CoA to the synthesis of either ATP or GTP and thus represents the only step of substrate-level phosphorylation in the TCA. The beta subunit provides nucleotide specificity of the enzyme and binds the substrate succinate, while the binding sites for coenzyme A and phosphate are found in the alpha subunit. This Rhodopseudomonas palustris (strain BisB18) protein is Succinate--CoA ligase [ADP-forming] subunit beta.